The chain runs to 89 residues: Calsenilin isoform 4 (89 aa).

Residues 27-57 (SSRDAEDQGSREGIGWQPPGRSWAHTTEQEG) form a disordered region.

Isoform 1 or isoform 4 (T+ forms) are expressed at equal levels with isoform 2 or isoform 3 (T- forms) in brain.

Functionally, unknown for isoform 4. Csen is involved in calcium-dependent transcriptional repression, regulation of potassium channels, and perhaps in processing of PSEN2 and apoptosis. The chain is Calsenilin isoform 4 (Kcnip3) from Mus musculus (Mouse).